The following is a 41-amino-acid chain: Probable cinnamyl alcohol dehydrogenase 2 (41 aa).

The protein belongs to the zinc-containing alcohol dehydrogenase family. Zn(2+) serves as cofactor.

It catalyses the reaction (E)-cinnamyl alcohol + NADP(+) = (E)-cinnamaldehyde + NADPH + H(+). It carries out the reaction (E)-coniferol + NADP(+) = (E)-coniferaldehyde + NADPH + H(+). The catalysed reaction is (E)-sinapyl alcohol + NADP(+) = (E)-sinapaldehyde + NADPH + H(+). The enzyme catalyses (E)-4-coumaroyl alcohol + NADP(+) = (E)-4-coumaraldehyde + NADPH + H(+). It catalyses the reaction (E)-caffeyl alcohol + NADP(+) = (E)-caffeyl aldehyde + NADPH + H(+). Its pathway is aromatic compound metabolism; phenylpropanoid biosynthesis. Functionally, involved in lignin biosynthesis. Catalyzes the final step specific for the production of lignin monomers, like coniferyl alcohol, sinapyl alcohol and 4-coumaryl alcohol. This Pseudotsuga menziesii (Douglas-fir) protein is Probable cinnamyl alcohol dehydrogenase 2.